The primary structure comprises 502 residues: Reduced meiotic recombination protein C1442.04c (502 aa).

Serine 328, serine 330, and serine 331 each carry phosphoserine. Disordered stretches follow at residues 353–391, 420–440, and 454–502; these read NDLN…LRDN, GSLN…ENVD, and ESAF…PSDD. Residues 367-378 are compositionally biased toward acidic residues; the sequence is DGSEIITLDEND. Polar residues-rich tracts occupy residues 420 to 436 and 462 to 477; these read GSLN…TNDG and GTIN…TTDT.

This sequence belongs to the RMR1 family.

Its subcellular location is the cytoplasm. It is found in the nucleus. In terms of biological role, required for normal levels of gene conversion events during meiosis. This chain is Reduced meiotic recombination protein C1442.04c, found in Schizosaccharomyces pombe (strain 972 / ATCC 24843) (Fission yeast).